The sequence spans 343 residues: NAD-dependent deacetylase sir2E (343 aa).

Residues 27-300 enclose the Deacetylase sirtuin-type domain; it reads YLKNKKEFEF…PLLERQLLYE (274 aa). Catalysis depends on His-152, which acts as the Proton acceptor. Zn(2+) contacts are provided by Cys-160, Cys-165, Cys-200, and Cys-203.

It belongs to the sirtuin family.

Its subcellular location is the nucleus. It carries out the reaction N(6)-acetyl-L-lysyl-[protein] + NAD(+) + H2O = 2''-O-acetyl-ADP-D-ribose + nicotinamide + L-lysyl-[protein]. Functionally, NAD-dependent deacetylase, which plays an important role in the regulation of transcriptional repression. May play a role in cell cycle. When overexpressed, the cell cycle is accelerated. The sequence is that of NAD-dependent deacetylase sir2E (sir2E) from Dictyostelium discoideum (Social amoeba).